Reading from the N-terminus, the 810-residue chain is Protein kinase C-binding protein NELL1 (810 aa).

Residues 1–21 form the signal peptide; it reads MPMDVILVLWFCVCTARTVLG. N-linked (GlcNAc...) asparagine glycosylation is found at Asn-40, Asn-53, Asn-83, Asn-224, Asn-294, and Asn-372. One can recognise a Laminin G-like domain in the interval 57-227; the sequence is AFLFQDVQRE…TQCPNLNRTC (171 aa). The region spanning 271 to 332 is the VWFC 1 domain; that stretch reads KTCQVSGLLY…ISGQCCKVCR (62 aa). Cystine bridges form between Cys-395/Cys-407, Cys-401/Cys-416, and Cys-418/Cys-432. Residues Asp-434, Ile-435, and Glu-437 each coordinate Ca(2+). One can recognise an EGF-like 1; calcium-binding domain in the interval 434 to 475; that stretch reads DIDECAAKMHYCHANTVCVNLPGLYRCDCVPGYIRVDDFSCT. 15 cysteine pairs are disulfide-bonded: Cys-438–Cys-451, Cys-445–Cys-460, Cys-462–Cys-474, Cys-480–Cys-493, Cys-487–Cys-502, Cys-504–Cys-515, Cys-519–Cys-529, Cys-523–Cys-535, Cys-537–Cys-546, Cys-553–Cys-566, Cys-560–Cys-575, Cys-577–Cys-594, Cys-600–Cys-613, Cys-607–Cys-622, and Cys-624–Cys-630. The Ca(2+) site is built by Asn-453, Leu-454, and Leu-457. In terms of domain architecture, EGF-like 2; calcium-binding spans 476 to 516; it reads EHDDCGSGQHNCDKNAICTNTVQGHSCTCQPGYVGNGTICK. The N-linked (GlcNAc...) asparagine glycan is linked to Asn-511. One can recognise an EGF-like 3 domain in the interval 517–547; sequence AFCEEGCRYGGTCVAPNKCVCPSGFTGSHCE. The EGF-like 4; calcium-binding domain occupies 549-587; sequence DIDECAEGFVECHNHSRCVNLPGWYHCECRSGFHDDGTY. N-linked (GlcNAc...) asparagine glycosylation is present at Asn-562. One can recognise an EGF-like 5; calcium-binding domain in the interval 596-631; sequence DIDECALRTHTCWNDSACINLAGGFDCLCPSGPSCS. An N-linked (GlcNAc...) asparagine glycan is attached at Asn-609. VWFC domains follow at residues 632–687 and 692–750; these read GDCP…PECD and SQCL…PRCV. A glycan (N-linked (GlcNAc...) asparagine) is linked at Asn-708.

Interacts with ATRAID; the interaction promotes osteoblast cell differentiation and mineralization. Homotrimer. Binds to PKC beta-1. Interacts with ROBO3.

The protein localises to the cytoplasm. Its subcellular location is the nucleus envelope. It is found in the secreted. Functionally, plays a role in the control of cell growth and differentiation. Promotes osteoblast cell differentiation and terminal mineralization. The polypeptide is Protein kinase C-binding protein NELL1 (Nell1) (Rattus norvegicus (Rat)).